The primary structure comprises 130 residues: Iron-sulfur cluster insertion protein ErpA 2 (130 aa).

3 residues coordinate iron-sulfur cluster: cysteine 58, cysteine 122, and cysteine 124.

This sequence belongs to the HesB/IscA family. Homodimer. The cofactor is iron-sulfur cluster.

Required for insertion of 4Fe-4S clusters for at least IspG. This Methylococcus capsulatus (strain ATCC 33009 / NCIMB 11132 / Bath) protein is Iron-sulfur cluster insertion protein ErpA 2.